The chain runs to 182 residues: NAD(P)H-quinone oxidoreductase subunit I, chloroplastic (182 aa).

4Fe-4S ferredoxin-type domains lie at 52–81 (GRIH…VDWE) and 92–121 (KSYS…MTEE). 8 residues coordinate [4Fe-4S] cluster: cysteine 61, cysteine 64, cysteine 67, cysteine 71, cysteine 101, cysteine 104, cysteine 107, and cysteine 111.

This sequence belongs to the complex I 23 kDa subunit family. As to quaternary structure, NDH is composed of at least 16 different subunits, 5 of which are encoded in the nucleus. Requires [4Fe-4S] cluster as cofactor.

The protein localises to the plastid. It localises to the chloroplast thylakoid membrane. The enzyme catalyses a plastoquinone + NADH + (n+1) H(+)(in) = a plastoquinol + NAD(+) + n H(+)(out). It carries out the reaction a plastoquinone + NADPH + (n+1) H(+)(in) = a plastoquinol + NADP(+) + n H(+)(out). Its function is as follows. NDH shuttles electrons from NAD(P)H:plastoquinone, via FMN and iron-sulfur (Fe-S) centers, to quinones in the photosynthetic chain and possibly in a chloroplast respiratory chain. The immediate electron acceptor for the enzyme in this species is believed to be plastoquinone. Couples the redox reaction to proton translocation, and thus conserves the redox energy in a proton gradient. The sequence is that of NAD(P)H-quinone oxidoreductase subunit I, chloroplastic from Chaetosphaeridium globosum (Charophycean green alga).